The sequence spans 447 residues: Chordin-like protein 1 (447 aa).

The signal sequence occupies residues M1–T22. 2 VWFC domains span residues T30–P95 and K108–R174. N-linked (GlcNAc...) asparagine glycosylation occurs at N113. The Cell attachment site signature appears at R174 to D176. The segment at H199–R219 is disordered. In terms of domain architecture, VWFC 3 spans Q253 to P318. N-linked (GlcNAc...) asparagine glycosylation is present at N286.

It localises to the secreted. In terms of biological role, seems to antagonize the function of BMP4 by binding to it and preventing its interaction with receptors. Alters the fate commitment of neural stem cells from gliogenesis to neurogenesis. Contributes to neuronal differentiation of neural stem cells in the brain by preventing the adoption of a glial fate. May play a crucial role in dorsoventral axis formation. May play a role in embryonic bone formation. Plays a role during anterior segment eye development. This is Chordin-like protein 1 (Chrdl1) from Rattus norvegicus (Rat).